We begin with the raw amino-acid sequence, 30 residues long: ALTVETKKRPIGSKPXALRRVGFILNXAPY.

This sequence belongs to the bacterial ribosomal protein bL25 family. In terms of assembly, part of the 50S ribosomal subunit; part of the 5S rRNA/L5/L18/L25 subcomplex. Contacts the 5S rRNA. Binds to the 5S rRNA independently of L5 and L18.

This is one of the proteins that binds to the 5S RNA in the ribosome where it forms part of the central protuberance. In Anabaena variabilis, this protein is Large ribosomal subunit protein bL25 (rplY).